A 1611-amino-acid chain; its full sequence is DNA (cytosine-5)-methyltransferase 1 (1611 aa).

The interaction with DMAP1 stretch occupies residues 1–120 (MPARTAPARV…SQTSGEDCRV (120 aa)). An interaction with DNMT3A region spans residues 1–148 (MPARTAPARV…RRSKSDGETK (148 aa)). Interaction with the PRC2/EED-EZH2 complex stretches follow at residues 1–334 (MPAR…TEKK) and 306–603 (KPQV…TIRQ). Ser-15 bears the Phosphoserine mark. In terms of domain architecture, DMAP1-binding spans 16–109 (RAFSLPDDVR…SREANGCLEN (94 aa)). At Lys-70 the chain carries N6,N6-dimethyllysine; by EHMT2. Residues 123–328 (AEKGKPPKPV…EEKRRRTTYR (206 aa)) are disordered. Residue Ser-133 is modified to Phosphoserine. A Phosphothreonine modification is found at Thr-137. Phosphoserine is present on Ser-141. At Lys-142 the chain carries N6-methyllysine; by SETD7. Ser-143 carries the post-translational modification Phosphoserine; by PKB/AKT1. The interaction with DNMT3B stretch occupies residues 149 to 216 (SEVSSSPRIT…TSRERVAGLL (68 aa)). 2 positions are modified to phosphoserine: Ser-152 and Ser-154. Lys-160 is modified (N6-acetyllysine). The interval 163–174 (RQTTITSHFPRG) is interaction with PCNA. Over residues 163-174 (RQTTITSHFPRG) the composition is skewed to low complexity. Thr-166 is modified (phosphothreonine). Positions 177 to 204 (KRKPEEEPEKVKSDDSVDEEKDQEEKRR) match the Nuclear localization signal motif. 5 stretches are compositionally biased toward basic and acidic residues: residues 178–191 (RKPE…KSDD), 199–212 (QEEK…RERV), 220–265 (EPGR…RDVR), 279–311 (KDEK…QVSD), and 319–328 (EEKRRRTTYR). An N6-acetyllysine modification is found at Lys-188. Lys-257 carries the N6-acetyllysine; alternate modification. Lys-257 participates in a covalent cross-link: Glycyl lysine isopeptide (Lys-Gly) (interchain with G-Cter in SUMO2); alternate. Ser-310 carries the phosphoserine modification. The segment at 329–548 (ELTEKKMTRT…NLNRFTEDSL (220 aa)) is DNA replication foci-targeting sequence. The Zn(2+) site is built by Cys-351 and Cys-354. A phosphoserine mark is found at Ser-392 and Ser-396. Residues Cys-412 and His-416 each coordinate Zn(2+). A phosphoserine mark is found at Ser-507 and Ser-547. Residues 594 to 614 (RAERRQTIRQPAKEKDKGPTK) form a disordered region. A CXXC-type zinc finger spans residues 643–689 (NAFKRRRCGVCEICQQPECGKCKACKDMVKFGGSGRSKQACQKRRCP). Zn(2+) is bound by residues Cys-650, Cys-653, Cys-656, Cys-661, Cys-664, Cys-667, Cys-683, and Cys-688. The autoinhibitory linker stretch occupies residues 690-751 (NMAMKEADDD…SYYKKVCIDS (62 aa)). The interval 695–726 (EADDDEEVDDNIPEMPSPKKMHQGKKKKQNKN) is disordered. The segment covering 696-706 (ADDDEEVDDNI) has biased composition (acidic residues). Position 711 is a phosphoserine (Ser-711). The segment covering 713-725 (KKMHQGKKKKQNK) has biased composition (basic residues). Position 729 is a phosphoserine (Ser-729). An N6-acetyllysine modification is found at Lys-746. Positions 752-877 (ETLEVGDCVS…QDYARFESPP (126 aa)) constitute a BAH 1 domain. Phosphoserine is present on Ser-875. N6-acetyllysine occurs at positions 888, 954, 958, 972, and 1051. Positions 969–1097 (HYRKYSDYIK…AKSKSFEDPP (129 aa)) constitute a BAH 2 domain. The interval 1091 to 1126 (KSFEDPPNHARSTGNKGKGKGKGKNRTKSQTCEPSE) is disordered. 4 consecutive repeat copies span residues 1106 to 1107 (KG), 1108 to 1109 (KG), 1110 to 1111 (KG), and 1112 to 1113 (KG). Residues 1106-1115 (KGKGKGKGKN) are 5 X 2 AA tandem repeats of K-G. Residues 1107-1117 (GKGKGKGKNRT) are compositionally biased toward basic residues. Lys-1108, Lys-1110, Lys-1112, Lys-1114, and Lys-1118 each carry N6-acetyllysine. The 5; approximate repeat unit spans residues 1114–1115 (KN). Positions 1118-1611 (KSQTCEPSEL…AKIKEEAAKD (494 aa)) are interaction with the PRC2/EED-EZH2 complex. The SAM-dependent MTase C5-type domain occupies 1136 to 1595 (LRTLDVFSGC…LEIKRCMLAK (460 aa)). Positions 1136–1611 (LRTLDVFSGC…AKIKEEAAKD (476 aa)) are catalytic. S-adenosyl-L-methionine contacts are provided by residues Ser-1143, 1147 to 1148 (GL), 1165 to 1166 (EM), 1187 to 1188 (DC), and Cys-1188. The active site involves Cys-1223. An N6-acetyllysine mark is found at Lys-1346 and Lys-1412. Positions 1574 and 1576 each coordinate S-adenosyl-L-methionine. Lys-1605 participates in a covalent cross-link: Glycyl lysine isopeptide (Lys-Gly) (interchain with G-Cter in SUMO2).

Belongs to the class I-like SAM-binding methyltransferase superfamily. C5-methyltransferase family. Homodimer. Forms a stable complex with E2F1, BB1 and HDAC1. Forms a complex with DMAP1 and HDAC2, with direct interaction. Interacts with the PRC2/EED-EZH2 complex. Probably part of a corepressor complex containing ZNF304, TRIM28, SETDB1 and DNMT1. Interacts with UHRF1; promoting its recruitment to hemimethylated DNA. Interacts with USP7, promoting its deubiquitination. Interacts with PCNA. Interacts with MBD2 and MBD3. Interacts with DNMT3A and DNMT3B. Interacts with UBC9. Interacts with CSNK1D. Interacts with HDAC1. Interacts with BAZ2A/TIP5. Interacts with SIRT7. Interacts with ZNF263; recruited to the SIX3 promoter along with other proteins involved in chromatin modification and transcriptional corepression where it contributes to transcriptional repression. Interacts with L3MBTL3 and DCAF5; the interaction requires DNMT1 methylation at Lys-142 and is necessary to target DNMT1 for ubiquitination by the CRL4-DCAF5 E3 ubiquitin ligase complex and proteasomal degradation. Interacts with PHF20L1; the interaction requires DNMT1 methylation at Lys-142 and protects DNMT1 from ubiquitination and proteasomal degradation. Sumoylated; sumoylation increases activity. Post-translationally, acetylation on multiple lysines, mainly by KAT2B/PCAF, regulates cell cycle G(2)/M transition. Deacetylation of Lys-1346 and Lys-1412 by SIRT1 increases methyltransferase activity. In terms of processing, phosphorylation of Ser-154 by CDKs is important for enzymatic activity and protein stability. Phosphorylation of Ser-143 by AKT1 prevents methylation by SETD7 thereby increasing DNMT1 stability. Methylation at Lys-142 by SETD7 is necessary for the regulation of DNMT1 proteasomal degradation. Post-translationally, ubiquitinated by UHRF1; interaction with USP7 counteracts ubiquitination by UHRF1 by promoting deubiquitination and preventing degradation by the proteasome.

The protein resides in the nucleus. The enzyme catalyses a 2'-deoxycytidine in DNA + S-adenosyl-L-methionine = a 5-methyl-2'-deoxycytidine in DNA + S-adenosyl-L-homocysteine + H(+). Its function is as follows. Methylates CpG residues. Preferentially methylates hemimethylated DNA. Associates with DNA replication sites in S phase maintaining the methylation pattern in the newly synthesized strand, that is essential for epigenetic inheritance. Associates with chromatin during G2 and M phases to maintain DNA methylation independently of replication. It is responsible for maintaining methylation patterns established in development. DNA methylation is coordinated with methylation of histones. Mediates transcriptional repression by direct binding to HDAC2. In association with DNMT3B and via the recruitment of CTCFL/BORIS, involved in activation of BAG1 gene expression by modulating dimethylation of promoter histone H3 at H3K4 and H3K9. Probably forms a corepressor complex required for activated KRAS-mediated promoter hypermethylation and transcriptional silencing of tumor suppressor genes (TSGs) or other tumor-related genes in colorectal cancer (CRC) cells. Also required to maintain a transcriptionally repressive state of genes in undifferentiated embryonic stem cells (ESCs). Associates at promoter regions of tumor suppressor genes (TSGs) leading to their gene silencing. Promotes tumor growth. In Bos taurus (Bovine), this protein is DNA (cytosine-5)-methyltransferase 1 (DNMT1).